Consider the following 139-residue polypeptide: Endoribonuclease YbeY (139 aa).

Residues H105, H109, and D115 each coordinate Zn(2+).

The protein belongs to the endoribonuclease YbeY family. Zn(2+) serves as cofactor.

It is found in the cytoplasm. Functionally, single strand-specific metallo-endoribonuclease involved in late-stage 70S ribosome quality control and in maturation of the 3' terminus of the 16S rRNA. This Flavobacterium johnsoniae (strain ATCC 17061 / DSM 2064 / JCM 8514 / BCRC 14874 / CCUG 350202 / NBRC 14942 / NCIMB 11054 / UW101) (Cytophaga johnsonae) protein is Endoribonuclease YbeY.